Here is a 173-residue protein sequence, read N- to C-terminus: ATP-dependent protease subunit HslV (173 aa).

Residue threonine 2 is part of the active site. Residues glycine 158, aspartate 161, and serine 164 each coordinate Na(+).

The protein belongs to the peptidase T1B family. HslV subfamily. A double ring-shaped homohexamer of HslV is capped on each side by a ring-shaped HslU homohexamer. The assembly of the HslU/HslV complex is dependent on binding of ATP.

It localises to the cytoplasm. It catalyses the reaction ATP-dependent cleavage of peptide bonds with broad specificity.. With respect to regulation, allosterically activated by HslU binding. In terms of biological role, protease subunit of a proteasome-like degradation complex believed to be a general protein degrading machinery. This chain is ATP-dependent protease subunit HslV, found in Haemophilus ducreyi (strain 35000HP / ATCC 700724).